A 50-amino-acid chain; its full sequence is Parvalbumin (50 aa).

The EF-hand domain occupies 38 to 50 (KTHEQVKKVFNIL).

Belongs to the parvalbumin family.

Its function is as follows. Probably regulates the activity of the caudal neurosecretory system. Binds two calcium ions. The protein is Parvalbumin of Scyliorhinus canicula (Small-spotted catshark).